Here is a 298-residue protein sequence, read N- to C-terminus: Lipoyl synthase (298 aa).

Residues C37, C42, C48, C63, C67, C70, and S277 each coordinate [4Fe-4S] cluster. The region spanning 49–266 (WGGGTATVML…KTLAESYGFL (218 aa)) is the Radical SAM core domain.

Belongs to the radical SAM superfamily. Lipoyl synthase family. Requires [4Fe-4S] cluster as cofactor.

Its subcellular location is the cytoplasm. It catalyses the reaction [[Fe-S] cluster scaffold protein carrying a second [4Fe-4S](2+) cluster] + N(6)-octanoyl-L-lysyl-[protein] + 2 oxidized [2Fe-2S]-[ferredoxin] + 2 S-adenosyl-L-methionine + 4 H(+) = [[Fe-S] cluster scaffold protein] + N(6)-[(R)-dihydrolipoyl]-L-lysyl-[protein] + 4 Fe(3+) + 2 hydrogen sulfide + 2 5'-deoxyadenosine + 2 L-methionine + 2 reduced [2Fe-2S]-[ferredoxin]. Its pathway is protein modification; protein lipoylation via endogenous pathway; protein N(6)-(lipoyl)lysine from octanoyl-[acyl-carrier-protein]: step 2/2. Functionally, catalyzes the radical-mediated insertion of two sulfur atoms into the C-6 and C-8 positions of the octanoyl moiety bound to the lipoyl domains of lipoate-dependent enzymes, thereby converting the octanoylated domains into lipoylated derivatives. The sequence is that of Lipoyl synthase from Myxococcus xanthus (strain DK1622).